The sequence spans 905 residues: Dopamine D2-like receptor (905 aa).

The interval 1–23 (MLSPFDWRRGISSSGTGGTMAAQ) is disordered. Residues 1–377 (MLSPFDWRRG…GELRVVDHNY (377 aa)) are Extracellular-facing. N-linked (GlcNAc...) asparagine glycans are attached at residues asparagine 88, asparagine 146, asparagine 156, asparagine 166, asparagine 174, asparagine 257, asparagine 314, and asparagine 343. Residues 378–398 (WALILILFPILTLFGNILVIL) traverse the membrane as a helical segment. At 399–416 (SVCRERSLQTVTNYFIVS) the chain is on the cytoplasmic side. A helical membrane pass occupies residues 417-437 (LAIADLLVAVVVMPFAVYFLV). The Extracellular segment spans residues 438 to 450 (NGAWALPDVVCDF). A disulfide bridge connects residues cysteine 448 and cysteine 525. A helical transmembrane segment spans residues 451–471 (YIAMDVICSTSSIFNLVAISI). Residues 472–493 (DRYIAVTQPIKYAKHKNSRRVC) lie on the Cytoplasmic side of the membrane. A helical transmembrane segment spans residues 494-514 (LTILLVWAISAAIGSPIVLGL). Residues 515–531 (NNTPNREPDVCAFYNAD) lie on the Extracellular side of the membrane. The chain crosses the membrane as a helical span at residues 532–552 (FILYSSLSSFYIPCIIMVFLY). Residues 553–830 (WNIFKALRSR…AKKERKATKT (278 aa)) lie on the Cytoplasmic side of the membrane. 3 disordered regions span residues 600–631 (SRHA…ISPD), 702–753 (ATSA…SVGV), and 780–799 (DSTL…KNSQ). The segment covering 702-722 (ATSAAPRSSGSPPDSPLPSGA) has biased composition (low complexity). Residues 723-734 (TLQRSSVSSQRR) are compositionally biased toward polar residues. A compositionally biased stretch (basic and acidic residues) spans 735 to 746 (PTGDDSPKRGEP). A helical transmembrane segment spans residues 831–851 (LAIVLGVFLFCWLPFFSCNIM). The Extracellular segment spans residues 852–869 (DAMCAKFKKDCRPGLTAY). A helical transmembrane segment spans residues 870 to 890 (MMTTWLGYINSFVNPVIYTIF). Over 891–905 (NPEFRKAFKKIMHMG) the chain is Cytoplasmic.

It belongs to the G-protein coupled receptor 1 family. As to expression, highest expression is in adult heads.

Its subcellular location is the cell membrane. Receptor for dopamine. The activity of this receptor is mediated by G proteins which inhibit adenylyl cyclase. This is Dopamine D2-like receptor from Drosophila melanogaster (Fruit fly).